The chain runs to 191 residues: ECF RNA polymerase sigma-E factor (191 aa).

The binds RNAP core stretch occupies residues 1-153 (MSEQLTDQVL…MAITLRELDG (153 aa)). Residues 25–92 (LVVRYQHKVA…KNYLVAQGRR (68 aa)) are sigma-70 factor domain-2. The Polymerase core binding motif lies at 48–61 (DVVQESFIKAYRAL). Positions 129–180 (QIVFRTIESLPEDLRMAITLRELDGLSYEEIAAIMDCPVGTVRSRIFRAREA) are sigma-70 factor domain-4. Residues 156–175 (YEEIAAIMDCPVGTVRSRIF) constitute a DNA-binding region (H-T-H motif).

Belongs to the sigma-70 factor family. ECF subfamily. Interacts transiently with the RNAP catalytic core formed by RpoA, RpoB, RpoC and RpoZ (2 alpha, 1 beta, 1 beta' and 1 omega subunit) to form the RNAP holoenzyme that can initiate transcription. Interacts 1:1 with anti-sigma-E factor RseA which prevents binding to RNAP catalytic core.

The protein resides in the cytoplasm. ECF sigma-E is held in an inactive form by its cognate anti-sigma factor (RseA) until released by regulated intramembrane proteolysis (RIP). RIP occurs when an extracytoplasmic signal (periplasmic, acid or heat stress) triggers a concerted proteolytic cascade to transmit information and elicit cellular responses. In S.typhimurium there are 2 cascades, the heat shock response which depends on DegS and RseP, and acid response which depends only on RseP. The anti-sigma factor RseA is an inner membrane protein, binding sigma-E in the cytoplasm and RseB in the periplasm. RseA is first cut extracytoplasmically (site-1 protease, S1P, by DegS), then within the membrane itself (site-2 protease, S2P, by RseP), while cytoplasmic proteases (predominantly ClpX-ClpP) finish degrading the regulatory protein, liberating sigma-E. Degradation of RseA requires 2 signals to activate DegS; an outer membrane protein (OMP) signal activates DegS, while an LPS signal causes release of RseB from RseA, freeing RseA to be cleaved. OMP stress can be abrogated by overexpression of the sRNA rybB. Its function is as follows. Sigma factors are initiation factors that promote the attachment of RNA polymerase (RNAP) to specific initiation sites and are then released. Extracytoplasmic function (ECF) sigma-E controls the envelope stress response, responding to periplasmic protein stress, increased levels of periplasmic lipopolysaccharide (LPS) as well as acid stress, heat shock and oxidative stress; it controls protein processing in the extracytoplasmic compartment. The protein is ECF RNA polymerase sigma-E factor (rpoE) of Salmonella typhimurium (strain 14028s / SGSC 2262).